Reading from the N-terminus, the 309-residue chain is Homoserine O-succinyltransferase (309 aa).

Residue C142 is the Acyl-thioester intermediate of the active site. Residues K163 and S192 each contribute to the substrate site. H235 functions as the Proton acceptor in the catalytic mechanism. The active site involves E237. R249 serves as a coordination point for substrate.

The protein belongs to the MetA family.

It is found in the cytoplasm. It catalyses the reaction L-homoserine + succinyl-CoA = O-succinyl-L-homoserine + CoA. It functions in the pathway amino-acid biosynthesis; L-methionine biosynthesis via de novo pathway; O-succinyl-L-homoserine from L-homoserine: step 1/1. Its function is as follows. Transfers a succinyl group from succinyl-CoA to L-homoserine, forming succinyl-L-homoserine. This chain is Homoserine O-succinyltransferase, found in Proteus mirabilis (strain HI4320).